The sequence spans 142 residues: Hemoglobin subunit alpha-5 (142 aa).

One can recognise a Globin domain in the interval 2–142 (TFSSAEKAAI…VSAVLVSKYR (141 aa)). Position 59 (H59) interacts with O2. H88 contacts heme b.

Belongs to the globin family. Heterotetramer of two alpha chains and two beta chains. In terms of tissue distribution, red blood cells.

This is a larval (tadpole) alpha-globin. This chain is Hemoglobin subunit alpha-5 (hba5), found in Xenopus laevis (African clawed frog).